The chain runs to 367 residues: Nuclear hormone receptor-like 1 (367 aa).

A DNA-binding region (nuclear receptor) is located at residues 32–107; sequence GQPCVVCGDD…NGMTKSLVLN (76 aa). 2 consecutive NR C4-type zinc fingers follow at residues 35 to 55 and 71 to 95; these read CVVC…CEGC and CKSI…FQKC. Residues 145 to 367 enclose the NR LBD domain; it reads EFQSRIDQVT…IANILLFKFT (223 aa).

The protein belongs to the nuclear hormone receptor family.

The protein resides in the nucleus. This Onchocerca volvulus protein is Nuclear hormone receptor-like 1 (nhr-1).